The following is a 93-amino-acid chain: Putative regulatory protein Clos_1422 (93 aa).

The protein belongs to the RemA family.

The protein is Putative regulatory protein Clos_1422 of Alkaliphilus oremlandii (strain OhILAs) (Clostridium oremlandii (strain OhILAs)).